The chain runs to 23 residues: Dahlein-4.2 (23 aa).

In terms of tissue distribution, expressed by the skin dorsal glands.

The protein resides in the secreted. In terms of biological role, has no antimicrobial activity. This Ranoidea dahlii (Dahl's aquatic frog) protein is Dahlein-4.2.